Here is a 289-residue protein sequence, read N- to C-terminus: Probable endonuclease 4 (289 aa).

His-75, His-115, Glu-153, Asp-187, His-190, His-224, Asp-237, His-239, and Glu-269 together coordinate Zn(2+).

Belongs to the AP endonuclease 2 family. It depends on Zn(2+) as a cofactor.

The enzyme catalyses Endonucleolytic cleavage to 5'-phosphooligonucleotide end-products.. Functionally, endonuclease IV plays a role in DNA repair. It cleaves phosphodiester bonds at apurinic or apyrimidinic (AP) sites, generating a 3'-hydroxyl group and a 5'-terminal sugar phosphate. The polypeptide is Probable endonuclease 4 (Chlamydia abortus (strain DSM 27085 / S26/3) (Chlamydophila abortus)).